We begin with the raw amino-acid sequence, 241 residues long: Uridylate kinase (241 aa).

12–15 (KLSG) contacts ATP. Residues 20–25 (GDKGVG) form an involved in allosteric activation by GTP region. A UMP-binding site is contributed by G54. ATP contacts are provided by G55 and R59. Residues D74 and 135–142 (IGSPYFST) each bind UMP. Residues N163, Y169, and D172 each coordinate ATP.

It belongs to the UMP kinase family. As to quaternary structure, homohexamer.

It is found in the cytoplasm. The catalysed reaction is UMP + ATP = UDP + ADP. Its pathway is pyrimidine metabolism; CTP biosynthesis via de novo pathway; UDP from UMP (UMPK route): step 1/1. Allosterically activated by GTP. Inhibited by UTP. Functionally, catalyzes the reversible phosphorylation of UMP to UDP. This chain is Uridylate kinase, found in Streptococcus gordonii (strain Challis / ATCC 35105 / BCRC 15272 / CH1 / DL1 / V288).